Consider the following 205-residue polypeptide: Holliday junction branch migration complex subunit RuvA (205 aa).

A domain I region spans residues methionine 1 to isoleucine 64. Positions histidine 65–glutamine 143 are domain II. Positions glycine 144–alanine 156 are flexible linker. The interval methionine 157–leucine 205 is domain III.

This sequence belongs to the RuvA family. Homotetramer. Forms an RuvA(8)-RuvB(12)-Holliday junction (HJ) complex. HJ DNA is sandwiched between 2 RuvA tetramers; dsDNA enters through RuvA and exits via RuvB. An RuvB hexamer assembles on each DNA strand where it exits the tetramer. Each RuvB hexamer is contacted by two RuvA subunits (via domain III) on 2 adjacent RuvB subunits; this complex drives branch migration. In the full resolvosome a probable DNA-RuvA(4)-RuvB(12)-RuvC(2) complex forms which resolves the HJ.

It is found in the cytoplasm. Its function is as follows. The RuvA-RuvB-RuvC complex processes Holliday junction (HJ) DNA during genetic recombination and DNA repair, while the RuvA-RuvB complex plays an important role in the rescue of blocked DNA replication forks via replication fork reversal (RFR). RuvA specifically binds to HJ cruciform DNA, conferring on it an open structure. The RuvB hexamer acts as an ATP-dependent pump, pulling dsDNA into and through the RuvAB complex. HJ branch migration allows RuvC to scan DNA until it finds its consensus sequence, where it cleaves and resolves the cruciform DNA. This is Holliday junction branch migration complex subunit RuvA from Sodalis glossinidius (strain morsitans).